Reading from the N-terminus, the 510-residue chain is MKEDKILVLDFGGQYSQLIARRVRECNVYSIIKPYNISIDQIKDINPAGIIFSGGPKSVTGPEAPMIDKEVFKLNIPILGICYGMQLMTALLPGGAVEKARHGEYGKARLHITEKDKLFEGISDSQVWMSHWDRVKKVPDGFKVTAKTDITPVAAMGNPELKFYGVQFHPEVVHTIQGLNIIRNYLFKVCGVKGTWNMADFINEEIDRIKEEVGSSQVISGLSGGVDSAVASTMVHRAIGDQLTCIFVDHGLLRKGEAEQVKRTFVDEFNIPLVYVDARERFLNRLNGVKDPETKRKIIGEEFIRVFEEEARKLGDARYLVQGTLYSDVIESGSETAETIKSHHNVGGLPDNMDFKLIEPLRNLFKDEVRKIGEVLGLPDEIVWRQPFPGPGLAIRIIGEIDGKKLEILRKADSIIQEEIKEAGYYKEIWQSFAVLPDLKSVGVMGDTRTYGYPIILRAVTSDDAMTADWARLPYELLEKISTRIVNEVDSVNRVVYDITSKPPATIEWE.

Positions 5-195 (KILVLDFGGQ…LFKVCGVKGT (191 aa)) constitute a Glutamine amidotransferase type-1 domain. Residue Cys-82 is the Nucleophile of the active site. Active-site residues include His-169 and Glu-171. In terms of domain architecture, GMPS ATP-PPase spans 196-385 (WNMADFINEE…LGLPDEIVWR (190 aa)). ATP is bound at residue 223–229 (SGGVDSA).

In terms of assembly, homodimer.

The enzyme catalyses XMP + L-glutamine + ATP + H2O = GMP + L-glutamate + AMP + diphosphate + 2 H(+). It participates in purine metabolism; GMP biosynthesis; GMP from XMP (L-Gln route): step 1/1. Catalyzes the synthesis of GMP from XMP. This Halothermothrix orenii (strain H 168 / OCM 544 / DSM 9562) protein is GMP synthase [glutamine-hydrolyzing].